The following is a 466-amino-acid chain: Siroheme synthase (466 aa).

The segment at 1-203 is precorrin-2 dehydrogenase /sirohydrochlorin ferrochelatase; it reads MNYLPIFIDI…GKIQEAKADL (203 aa). NAD(+) is bound by residues 22–23 and 43–44; these read SI and KS. Ser128 is modified (phosphoserine). Positions 216-466 are uroporphyrinogen-III C-methyltransferase; the sequence is GAVYLVGGGP…FDAKPISSKK (251 aa). Pro225 serves as a coordination point for S-adenosyl-L-methionine. Asp248 functions as the Proton acceptor in the catalytic mechanism. Residue Lys270 is the Proton donor of the active site. S-adenosyl-L-methionine-binding positions include 301-303, Ile306, 331-332, Met383, and Gly412; these read GGD and TA.

In the N-terminal section; belongs to the precorrin-2 dehydrogenase / sirohydrochlorin ferrochelatase family. The protein in the C-terminal section; belongs to the precorrin methyltransferase family.

The enzyme catalyses uroporphyrinogen III + 2 S-adenosyl-L-methionine = precorrin-2 + 2 S-adenosyl-L-homocysteine + H(+). The catalysed reaction is precorrin-2 + NAD(+) = sirohydrochlorin + NADH + 2 H(+). It carries out the reaction siroheme + 2 H(+) = sirohydrochlorin + Fe(2+). It functions in the pathway cofactor biosynthesis; adenosylcobalamin biosynthesis; precorrin-2 from uroporphyrinogen III: step 1/1. The protein operates within cofactor biosynthesis; adenosylcobalamin biosynthesis; sirohydrochlorin from precorrin-2: step 1/1. Its pathway is porphyrin-containing compound metabolism; siroheme biosynthesis; precorrin-2 from uroporphyrinogen III: step 1/1. It participates in porphyrin-containing compound metabolism; siroheme biosynthesis; siroheme from sirohydrochlorin: step 1/1. It functions in the pathway porphyrin-containing compound metabolism; siroheme biosynthesis; sirohydrochlorin from precorrin-2: step 1/1. Its function is as follows. Multifunctional enzyme that catalyzes the SAM-dependent methylations of uroporphyrinogen III at position C-2 and C-7 to form precorrin-2 via precorrin-1. Then it catalyzes the NAD-dependent ring dehydrogenation of precorrin-2 to yield sirohydrochlorin. Finally, it catalyzes the ferrochelation of sirohydrochlorin to yield siroheme. The chain is Siroheme synthase from Vesicomyosocius okutanii subsp. Calyptogena okutanii (strain HA).